We begin with the raw amino-acid sequence, 315 residues long: Cross-pathway control WD-repeat protein 2 (315 aa).

WD repeat units lie at residues 14–54 (GHKG…DSYG), 62–101 (GHNH…TTRR), 104–144 (GHTS…YDIK), 147–188 (CHTE…LKTN), 191–230 (GHTG…HLYS), 232–270 (EAGD…IVDE), and 282–315 (GRQP…TVTS).

The protein belongs to the WD repeat G protein beta family. Ribosomal protein RACK1 subfamily.

Its function is as follows. Component of the ribosome, a large ribonucleoprotein complex responsible for the synthesis of proteins in the cell. The small ribosomal subunit (SSU) binds messenger RNAs (mRNAs) and translates the encoded message by selecting cognate aminoacyl-transfer RNA (tRNA) molecules. The large subunit (LSU) contains the ribosomal catalytic site termed the peptidyl transferase center (PTC), which catalyzes the formation of peptide bonds, thereby polymerizing the amino acids delivered by tRNAs into a polypeptide chain. The nascent polypeptides leave the ribosome through a tunnel in the LSU and interact with protein factors that function in enzymatic processing, targeting, and the membrane insertion of nascent chains at the exit of the ribosomal tunnel. Plays in important role in the regulation of vegetative growth and fruiting body development. Especially, positively regulates the expression of genes involved in fruiting body development such as FVFD30 and FVFD16, as well as genes encoding for lectins and hydrophobins. Also regulates the expression of genes involved in cAMP signaling pathway. This chain is Cross-pathway control WD-repeat protein 2, found in Flammulina velutipes (Agaricus velutipes).